Reading from the N-terminus, the 264-residue chain is Apolipoprotein A-I (264 aa).

Positions 1–18 (MKAVVLAVAVLFLTGSQA) are cleaved as a signal peptide. 2 tandem repeats follow at residues 67-88 (LNLL…EQLG) and 89-110 (HVSQ…EEMN). The tract at residues 67–264 (LNLLENWDTL…DQITKHVTTQ (198 aa)) is 10 X approximate tandem repeats. Methionine 109 is modified (methionine sulfoxide). One copy of the 3; half-length repeat lies at 111 to 121 (KDLEKVKKKVQ). 3 consecutive repeat copies span residues 122–143 (PFLD…HKVE), 144–165 (PLSL…EKLG), and 166–187 (PLGK…SHLR). The stretch at 188–207 (TYTEEMGQILAERLGAIKES) is one 7; truncated repeat. Methionine sulfoxide is present on methionine 193. Residues 208 to 229 (TSLAEYQTKASEHLRTFSKKAK) form repeat 8. The 9; half-length repeat unit spans residues 230 to 240 (PILEDLRQGLL). Residues 241 to 264 (PVAENFKTNIKNTFDQITKHVTTQ) form repeat 10.

Belongs to the apolipoprotein A1/A4/E family. In terms of assembly, homodimer. Interacts with APOA1BP and CLU. Component of a sperm activating protein complex (SPAP), consisting of APOA1, an immunoglobulin heavy chain, an immunoglobulin light chain and albumin. Interacts with NDRG1. Interacts with SCGB3A2. Interacts with NAXE and YJEFN3. Glycosylated. In terms of processing, palmitoylated. Post-translationally, phosphorylation sites are present in the extracellular medium.

The protein resides in the secreted. Participates in the reverse transport of cholesterol from tissues to the liver for excretion by promoting cholesterol efflux from tissues and by acting as a cofactor for the lecithin cholesterol acyltransferase (LCAT). As part of the SPAP complex, activates spermatozoa motility. The protein is Apolipoprotein A-I (Apoa1) of Fukomys damarensis (Damaraland mole rat).